A 198-amino-acid chain; its full sequence is tRNA(Phe) 7-((3-amino-3-carboxypropyl)-4-demethylwyosine(37)-N(4))-methyltransferase 1 (198 aa).

This sequence belongs to the TYW3 family.

It catalyses the reaction 4-demethyl-7-[(3S)-3-amino-3-carboxypropyl]wyosine(37) in tRNA(Phe) + S-adenosyl-L-methionine = 7-[(3S)-3-amino-3-carboxypropyl]wyosine(37) in tRNA(Phe) + S-adenosyl-L-homocysteine + H(+). S-adenosyl-L-methionine-dependent methyltransferase that acts as a component of the wyosine derivatives biosynthesis pathway. Probably methylates N-4 position of wybutosine-86 to produce wybutosine-72. In Thermococcus kodakarensis (strain ATCC BAA-918 / JCM 12380 / KOD1) (Pyrococcus kodakaraensis (strain KOD1)), this protein is tRNA(Phe) 7-((3-amino-3-carboxypropyl)-4-demethylwyosine(37)-N(4))-methyltransferase 1.